The sequence spans 221 residues: H-2 class II histocompatibility antigen, A-Q alpha chain (221 aa).

The tract at residues 1 to 76 (GIVVYQSPGD…KRSNFTPATN (76 aa)) is alpha-1. Over 1–183 (GIVVYQSPGD…IPAPMSELTE (183 aa)) the chain is Extracellular. Residues 77 to 170 (EAPQATVFPK…GLDEPVLKHW (94 aa)) form an alpha-2 region. The Ig-like C1-type domain occupies 79 to 171 (PQATVFPKSP…LDEPVLKHWE (93 aa)). A disulfide bond links C99 and C155. An N-linked (GlcNAc...) asparagine glycan is attached at N110. The tract at residues 171-183 (EPEIPAPMSELTE) is connecting peptide. The helical transmembrane segment at 184 to 209 (TVVCALGLSVGLVGIVVGTIFIIQGL) threads the bilayer. The Cytoplasmic portion of the chain corresponds to 210–221 (RSGGTSRPPGPL).

It belongs to the MHC class II family.

It localises to the membrane. The chain is H-2 class II histocompatibility antigen, A-Q alpha chain (H2-Aa) from Mus musculus (Mouse).